The sequence spans 138 residues: Superoxide dismutase [Mn] (138 aa).

The Mn(2+) site is built by His2, His49, Asp133, and His137.

Belongs to the iron/manganese superoxide dismutase family. The cofactor is Mn(2+).

The catalysed reaction is 2 superoxide + 2 H(+) = H2O2 + O2. Its function is as follows. Destroys superoxide anion radicals which are normally produced within the cells and which are toxic to biological systems. The chain is Superoxide dismutase [Mn] (sodA) from Mycolicibacterium phlei (Mycobacterium phlei).